A 118-amino-acid chain; its full sequence is Large ribosomal subunit protein bL20 (118 aa).

This sequence belongs to the bacterial ribosomal protein bL20 family.

Functionally, binds directly to 23S ribosomal RNA and is necessary for the in vitro assembly process of the 50S ribosomal subunit. It is not involved in the protein synthesizing functions of that subunit. This chain is Large ribosomal subunit protein bL20, found in Hamiltonella defensa subsp. Acyrthosiphon pisum (strain 5AT).